The chain runs to 224 residues: Small ribosomal subunit protein uS2 (224 aa).

Over residues 1–14 the composition is skewed to basic and acidic residues; it reads MAEAKPAPEKEAAV. The segment at 1-32 is disordered; the sequence is MAEAKPAPEKEAAVKTESVPVADDEAASAKEG.

This sequence belongs to the universal ribosomal protein uS2 family.

This Methanosarcina mazei (strain ATCC BAA-159 / DSM 3647 / Goe1 / Go1 / JCM 11833 / OCM 88) (Methanosarcina frisia) protein is Small ribosomal subunit protein uS2.